The sequence spans 554 residues: Developmental and secondary metabolism regulator ve-1 (554 aa).

Residues 31 to 230 form the Velvet domain; that stretch reads GRKLWYSLRV…AEQGCRVRIR (200 aa). Residues 45–50 carry the Nuclear localization signal motif; it reads LRARAC. A compositionally biased stretch (basic and acidic residues) spans 166 to 175; that stretch reads TKEDKDKDPE. Disordered stretches follow at residues 166 to 190, 232 to 430, and 465 to 528; these read TKEDKDKDPEEPNAPPDGSPGSFDF, DVRM…PHRL, and PRAY…VDDK. The segment covering 276–292 has biased composition (polar residues); that stretch reads RSMSGSTERTPYSSISD. Composition is skewed to pro residues over residues 363–372 and 485–494; these read SYPPPPPPHQ and LPPPPPPPPQ. Positions 455 to 487 are PEST; that stretch reads SPSNMAAPPYPRAYSVSNSGGLTSAGGYNQLPP. Residues 500–528 show a composition bias toward basic and acidic residues; the sequence is RAHDQTFRADPEMRRYQDGARERESVDDK.

This sequence belongs to the velvet family. VeA subfamily. As to quaternary structure, component of the heterotrimeric velvet complex composed of lae-1, ve-1 and vel-2; Ve-1 acting as a bridging protein between lae-1 and vel-2.

The protein localises to the nucleus. It localises to the cytoplasm. Its function is as follows. Component of the velvet transcription factor complex that controls sexual/asexual developmental ratio in response to light, promoting sexual development in the darkness while stimulating asexual sporulation under illumination. The velvet complex hat acts as a global regulator for secondary metabolite gene expression. In Neurospora crassa (strain ATCC 24698 / 74-OR23-1A / CBS 708.71 / DSM 1257 / FGSC 987), this protein is Developmental and secondary metabolism regulator ve-1.